The primary structure comprises 565 residues: Glucose starvation modulator protein 1 (565 aa).

The zn(2)-C6 fungal-type DNA-binding region spans 20 to 48 (CVFCHQKHLQCSNERPCKNCVKRNIAHGC). Disordered regions lie at residues 63-106 (GVSG…ESSN) and 250-269 (QVSP…NTLS). The span at 82–93 (SPLSTSMSPTDS) shows a compositional bias: polar residues. Over residues 252–269 (SPSPSNTSTSENNTNTLS) the composition is skewed to low complexity.

The protein belongs to the ERT1/acuK family.

Its subcellular location is the nucleus. In terms of biological role, transcription factor which regulates nonfermentable carbon utilization. This chain is Glucose starvation modulator protein 1 (GSM1), found in Candida dubliniensis (strain CD36 / ATCC MYA-646 / CBS 7987 / NCPF 3949 / NRRL Y-17841) (Yeast).